Consider the following 352-residue polypeptide: MSATASVATRHDWSLAEVRALFEQPFNDLLFQAQTVHRAHFDPNRVQVSTLLSIKTGACPEDCKYCPQSGHYNTGLDKEKLMEVQKVLEAAAEAKAIGSTRFCMGAAWKHPSAKDMPYVLEMVKGVKKLGLETCMTLGRLTQEQTQALADAGLDYYNHNLDTSPEFYGNIITTRTYSERLQTLAYVREAGMKICSGGILGMGESVDDRAGLLIQLANLPEHPESVPINMLVKVKGTPLAEEKDVDPFDFIRTLAVARIMMPKSHVRLSAGREQMNEQMQALAFMAGANSIFYGEKLLTTKNPQAEKDMQLFARLGIKPEEREEHADEVHQAAIEQALVEQRESKLFYNAASA.

In terms of domain architecture, Radical SAM core spans 44-262; the sequence is NRVQVSTLLS…LAVARIMMPK (219 aa). 3 residues coordinate [4Fe-4S] cluster: C59, C63, and C66. [2Fe-2S] cluster-binding residues include C103, C134, C194, and R266.

Belongs to the radical SAM superfamily. Biotin synthase family. Homodimer. [4Fe-4S] cluster is required as a cofactor. Requires [2Fe-2S] cluster as cofactor.

It carries out the reaction (4R,5S)-dethiobiotin + (sulfur carrier)-SH + 2 reduced [2Fe-2S]-[ferredoxin] + 2 S-adenosyl-L-methionine = (sulfur carrier)-H + biotin + 2 5'-deoxyadenosine + 2 L-methionine + 2 oxidized [2Fe-2S]-[ferredoxin]. It functions in the pathway cofactor biosynthesis; biotin biosynthesis; biotin from 7,8-diaminononanoate: step 2/2. Functionally, catalyzes the conversion of dethiobiotin (DTB) to biotin by the insertion of a sulfur atom into dethiobiotin via a radical-based mechanism. This is Biotin synthase from Pseudomonas aeruginosa (strain LESB58).